Here is an 896-residue protein sequence, read N- to C-terminus: MLKHRMTFILVAIAVIFPFIGYLLSFYTDWLFFAETGFSSVFMTTVYAQTGAGLIFGLLLFAFLQLNLHYANKGSFPLSGIYIVGGGDIRINRNEAGRLVRPVGILISLVLAFLAGNWGAMRWEDLLLFANRVTVGMADPVLGKDVGFYLFSLPFVELLKSFAGFMVLAASVLSAAAYYVKGGITLDDRGAGVDPRVRRHLAVLVGLFGLVVAAGFYLESFSLLLSNNGAFHGAGYVDVHGRLMTLRILTFLTPVAGVVLALGIWRGDWRLALGPPVVIVALYLVGVRVYPGLLQKFKVAPNELTLETPYLENHLKFTRYGYDLDKIETVPFDVDTKLSAADIANNDATIKNIRLWDHAPLLKTYSQLQQIRTYYKFFDVDNDRYMVNGQYSQVMLSPRELSYADLPSKNWINERLIFTHGNGITFGPVSRISKEGLPEFFVKDIPAVSLADIKVTRPEIYYGELSNEYVVVKTKVPEFSYPTATGNINTTYAGKGGVPIDSLLKKALFAAQFKTEKILLSSDITPESRIIYNRNIKERVRTIAPFLSFDVDPYMVVDDGGKLKWIVDAYTFSGRLPYSRPVQGGMNYLRNSVKVVVDAYDGTVSFYVSDAQDVMVKVYSRIFPGLFQPISAMPADLRKHVRYPNQYLQVQAAMFAAYHMTDPKVFYNKENLWQVPTLGEKPMEPYYTIMKLPGEKVEEYILLLPFTPSKRDNLAAWLTARCDGENYGKIRAYTFPRDRLIYGPKQIDARINQDSFISQQLTLWSQRGSEVIRGSLLVIPIEKSLLYVQPLFLAADKAGLPELKRVIVAFGDEVVMEENLELALQRLFGARKSIGTAAAAAAPPGAPAAAGQPASSLAKEAMSIYQRALNLQRQGDWSGYGEELRKLEQVLKRMAQ.

Transmembrane regions (helical) follow at residues 6–26 (MTFI…LLSF), 46–66 (VYAQ…FLQL), 99–119 (LVRP…GNWG), 158–180 (LLKS…AYYV), 201–221 (LAVL…LESF), 245–265 (TLRI…LGIW), and 271–291 (LALG…RVYP).

This sequence belongs to the UPF0182 family.

The protein localises to the cell membrane. The chain is UPF0182 protein GM21_2279 from Geobacter sp. (strain M21).